We begin with the raw amino-acid sequence, 174 residues long: MPRSFDMSADYEGSVEEVHRAFYEADYWKARLAETPVDVATLESIRVGGDSGDDGTIEVVTLQMVRSHNLPGLVTQLHRGDLSVRREETWGPVKEGIATASIAGSIVDAPVNLWGTAVLSPIPESGGSRMTLQVTIQVRIPFIGGKLERLIGTQLSQLVTIEQRFTTLWITNNV.

This is an uncharacterized protein from Mycobacterium tuberculosis (strain CDC 1551 / Oshkosh).